The primary structure comprises 401 residues: Mitochondrial distribution and morphology protein 12 (401 aa).

The region spanning 1–401 is the SMP-LTD domain; it reads MSIDINWDTL…VYPSFWTFLV (401 aa). Over residues 70 to 88 the composition is skewed to acidic residues; it reads YEEDEDYPDNEDDDDDEAG. Disordered regions lie at residues 70–95 and 190–247; these read YEED…NPRN and SLTL…EKSP. Low complexity predominate over residues 195-205; sequence PQSHPDPSSRP. Basic and acidic residues predominate over residues 209–220; that stretch reads HQHDDERRRSLA.

Belongs to the MDM12 family. Component of the ER-mitochondria encounter structure (ERMES) or MDM complex, composed of MMM1, MDM10, MDM12 and MDM34. An MMM1 homodimer associates with one molecule of MDM12 on each side in a pairwise head-to-tail manner, and the SMP-LTD domains of MMM1 and MDM12 generate a continuous hydrophobic tunnel for phospholipid trafficking.

It is found in the mitochondrion outer membrane. The protein localises to the endoplasmic reticulum membrane. Functionally, component of the ERMES/MDM complex, which serves as a molecular tether to connect the endoplasmic reticulum (ER) and mitochondria. Components of this complex are involved in the control of mitochondrial shape and protein biogenesis, and function in nonvesicular lipid trafficking between the ER and mitochondria. MDM12 is required for the interaction of the ER-resident membrane protein MMM1 and the outer mitochondrial membrane-resident beta-barrel protein MDM10. The MDM12-MMM1 subcomplex functions in the major beta-barrel assembly pathway that is responsible for biogenesis of all mitochondrial outer membrane beta-barrel proteins, and acts in a late step after the SAM complex. The MDM10-MDM12-MMM1 subcomplex further acts in the TOM40-specific pathway after the action of the MDM12-MMM1 complex. Essential for establishing and maintaining the structure of mitochondria and maintenance of mtDNA nucleoids. In Phaeosphaeria nodorum (strain SN15 / ATCC MYA-4574 / FGSC 10173) (Glume blotch fungus), this protein is Mitochondrial distribution and morphology protein 12.